We begin with the raw amino-acid sequence, 672 residues long: Amidase chyE (672 aa).

The active-site Nucleophile is Cys2. The Glutamine amidotransferase type-2 domain maps to 2-219 (CGISAFLCHP…PGHYLISRPN (218 aa)). The Asparagine synthetase domain occupies 250-639 (VRKRLLEAVK…TQEAVEKAFT (390 aa)).

Belongs to the asparagine synthetase family.

The protein operates within pigment biosynthesis. Functionally, amidase; part of the gene cluster that mediates the biosynthesis of the yellow pigment chrysogine. the NRPS chyA mediates the condensation of anthranilic acid and alanine into the intermediate 2-(2-aminopropanamido)benzoic acid. The remainder of the pathway is highly branched yielding at least 13 chrysogine-related compounds. The malonyl transferase chyE converts 2-(2-aminopropanamido)benzoic acid and 2-(2-aminopropanamido)benzamidine into 2-(2-(2-carboxyacetamido)propanamido)benzoic acid and 3-((1-((2-carbamoylphenyl)amino)-1-oxopropan-2-yl)amino)-3-oxopropanoic acid, respectively. ChyD is an amidase, being responsible for the amidation of the carboxylic acid moiety of 2-(2-aminopropanamido)benzoic acid, 2-(2-(2-carboxyacetamido)propanamido)benzoic acid and 2-(2-((4-amino-1-carboxy-4-oxobutyl)amino)propanamido)benzoic acid. ChyC is involved in the same reactions as ChyD, but plays a more minor role in the amidation reactions compared to chyD. The oxidoreductases chyH and chyM are involved in oxidation reactions that form N-pyruvoylanthranilamide from 2-(2-aminopropanamido)benzamidine and (1-((2-carbamoylphenyl)amino)-1-oxopropan-2-yl)glutamine, respectively. N-pyruvoylanthranilamide is further converted via two further branches in the pathway, yielding chrysogine and additional chrysogine-related coumpounds. Chrysogine is likely formed by a spontaneous ring closure from N-pyruvoylanthranilamide. The protein is Amidase chyE of Penicillium rubens (strain ATCC 28089 / DSM 1075 / NRRL 1951 / Wisconsin 54-1255) (Penicillium chrysogenum).